Here is a 314-residue protein sequence, read N- to C-terminus: Ferric-anguibactin transport system permease protein FatD (314 aa).

The next 10 membrane-spanning stretches (helical) occupy residues 1–21 (MTFR…FFGA), 49–69 (VALI…QHIV), 76–96 (PGTT…IVML), 103–123 (ERMF…IAII), 132–152 (ALVP…AEFY), 180–200 (IIFL…RFTV), 207–226 (IASN…LILV), 230–252 (VAVT…NLVA), 265–285 (IVAL…RVVL), and 288–308 (FEVP…LAFL).

It belongs to the binding-protein-dependent transport system permease family. FecCD subfamily. As to quaternary structure, part of an iron transport system composed of the outer membrane receptor FatA, the periplasmic binding protein FatB and the inner membrane proteins FatC and FatD.

The protein localises to the cell inner membrane. Functionally, involved in the uptake of iron in complex with the siderophore anguibactin. Responsible for the translocation of ferric-anguibactin across the cytoplasmic membrane. The polypeptide is Ferric-anguibactin transport system permease protein FatD (Vibrio anguillarum (strain ATCC 68554 / 775) (Listonella anguillarum)).